The primary structure comprises 420 residues: Gamma-glutamyl phosphate reductase (420 aa).

Belongs to the gamma-glutamyl phosphate reductase family.

Its subcellular location is the cytoplasm. The enzyme catalyses L-glutamate 5-semialdehyde + phosphate + NADP(+) = L-glutamyl 5-phosphate + NADPH + H(+). It participates in amino-acid biosynthesis; L-proline biosynthesis; L-glutamate 5-semialdehyde from L-glutamate: step 2/2. Functionally, catalyzes the NADPH-dependent reduction of L-glutamate 5-phosphate into L-glutamate 5-semialdehyde and phosphate. The product spontaneously undergoes cyclization to form 1-pyrroline-5-carboxylate. This is Gamma-glutamyl phosphate reductase from Alkalilimnicola ehrlichii (strain ATCC BAA-1101 / DSM 17681 / MLHE-1).